Consider the following 746-residue polypeptide: MSSRALPAVPFLLLSSCLLANAVHAAGQGDGSVIELGEQTVVATAQEETKQAPGVSIITAEDIAKRPPSNDLSQIIRTMPGVNLTGNSSSGQRGNNRQIDIRGMGPENTLILVDGKPVSSRNSVRYGWRGERDSRGDTNWVPADQVERIEVIRGPAAARYGNGAAGGVVNIITKQAGAETHGNLSVYSNFPQHKAEGASERMSFGLNGPLTENLSYRVYGNIAKTDSDDWDINAGHESNRTGKQAGTLPAGREGVRNKDIDGLLSWRLTPEQTLEFEAGFSRQGNIYTGDTQNTNSNNYVKQMLGHETNRMYRETYSVTHRGEWDFGSSLAYLQYEKTRNSRINEGLAGGTEGIFDPNNAGFYTATLRDLTAHGEVNLPLHLGYEQTLTLGSEWTEQKLDDPSSNTQNTEEGGSIPGLAGKNRSSSSSARIFSLFAEDNIELMPGTMLTPGLRWDHHDIVGDNWSPSLNLSHALTERVTLKAGIARAYKAPNLYQLNPDYLLYSRGQGCYGQSTSCYLRGNDGLKAETSVNKELGIEYSHDGLVAGLTYFRNDYKNKIESGLSPVDHASGGKGDYANAAIYQWENVPKAVVEGLEGTLTLPLADGLKWSNNLTYMLQSKNKETGDVLSVTPRYTLNSMLDWQATDDLSLQATVTWYGKQKPKKYDYHGDRVTGSANDQLSPYAIAGLGGTYRLSKNLSLGAGVDNLFDKRLFRAGNAQGVVGIDGAGAATYNEPGRTFYTSLTASF.

A signal peptide spans 1–25 (MSSRALPAVPFLLLSSCLLANAVHA). A TonB box motif is present at residues 39-44 (QTVVAT). The TBDR plug domain occupies 47–174 (EETKQAPGVS…AGGVVNIITK (128 aa)). Disordered stretches follow at residues 82-102 (VNLTGNSSSGQRGNNRQIDIR), 235-254 (GHESNRTGKQAGTLPAGREG), and 397-424 (QKLDDPSSNTQNTEEGGSIPGLAGKNRS). A compositionally biased stretch (polar residues) spans 84 to 98 (LTGNSSSGQRGNNRQ). In terms of domain architecture, TBDR beta-barrel spans 179-746 (ETHGNLSVYS…TFYTSLTASF (568 aa)). Positions 402-411 (PSSNTQNTEE) are enriched in polar residues. Positions 729–746 (ATYNEPGRTFYTSLTASF) match the TonB C-terminal box motif.

This sequence belongs to the TonB-dependent receptor family.

It is found in the cell outer membrane. Specific receptor for the siderophore ferric enterobactin. The protein is Ferric enterobactin receptor (pfeA) of Pseudomonas aeruginosa (strain ATCC 15692 / DSM 22644 / CIP 104116 / JCM 14847 / LMG 12228 / 1C / PRS 101 / PAO1).